Consider the following 86-residue polypeptide: Toxin CSTX-20 (86 aa).

In terms of tissue distribution, expressed by the venom gland.

It localises to the secreted. The sequence is that of Toxin CSTX-20 from Cupiennius salei (American wandering spider).